The primary structure comprises 391 residues: Na(+)/H(+) antiporter NhaA (391 aa).

The next 11 membrane-spanning stretches (helical) occupy residues 14-34, 59-79, 95-115, 124-144, 154-174, 177-197, 213-233, 261-281, 292-312, 331-351, and 363-383; these read AGGILLMVSVVLAMILANSPL, LIHWINDGLMAIFFMLIGLEV, SLPTFAAIGGMVFPAAVYLIF, VGWAIPAATDIAFALGIMALL, VFLLALAIIDDLGVVVIIALF, TDLSTISLIIAAAAILGLIGL, LILWIAVLKSGVHATLAGVII, FIILPIFAFANAGVDLSGMSL, IALGLLVGKPLGIMLFSYIAV, VAVMCGIGFTMSMFISSLAFV, and LGILLGSIASATIGYFWLSKV.

Belongs to the NhaA Na(+)/H(+) (TC 2.A.33) antiporter family.

Its subcellular location is the cell inner membrane. The catalysed reaction is Na(+)(in) + 2 H(+)(out) = Na(+)(out) + 2 H(+)(in). Its function is as follows. Na(+)/H(+) antiporter that extrudes sodium in exchange for external protons. The polypeptide is Na(+)/H(+) antiporter NhaA (Shewanella pealeana (strain ATCC 700345 / ANG-SQ1)).